The following is a 95-amino-acid chain: MKDPRDVLKRPIITERSADLMTEKKYTFEVDVRANKTEVKDAVEEIFGVKVEKVNVQNYKGKSKRVGRYTGMTSRRRKAIVKLTADSKEIEIFEA.

The protein belongs to the universal ribosomal protein uL23 family. Part of the 50S ribosomal subunit. Contacts protein L29, and trigger factor when it is bound to the ribosome.

Functionally, one of the early assembly proteins it binds 23S rRNA. One of the proteins that surrounds the polypeptide exit tunnel on the outside of the ribosome. Forms the main docking site for trigger factor binding to the ribosome. This is Large ribosomal subunit protein uL23 from Bacillus pumilus (strain SAFR-032).